Reading from the N-terminus, the 329-residue chain is MLSLESEVLTRHLPLFANKSILLFGDVRDRFADQIKANAKSVAVFSSYFDYARQYADVSFGLYCEIKAELAVFYWTKNKQECQYQLLQWLSQVDVGQEMLIIGENRAGVRSVEKLLEPYGNIAKIDSARRCGLYHFELQSVPDFDGKKFWKSYRLQDLNIFALPAVFSSAELDGGTQLLLSTFNKADRLKGKVLDLGCGAGVIGASLKQQFEKIKLTMSDIHAMALESSRHTLAENALDGTVVASDVFSNIEERFDLIVSNPPFHDGIDTAYRAVEDLIAQAKQRLNRGGELRIVANAFLPYPDLLDKAFGSHQVIAKSNKFKVYSAKA.

This sequence belongs to the methyltransferase superfamily. RsmC family. Monomer.

It is found in the cytoplasm. The enzyme catalyses guanosine(1207) in 16S rRNA + S-adenosyl-L-methionine = N(2)-methylguanosine(1207) in 16S rRNA + S-adenosyl-L-homocysteine + H(+). Specifically methylates the guanine in position 1207 of 16S rRNA in the 30S particle. The sequence is that of Ribosomal RNA small subunit methyltransferase C from Actinobacillus pleuropneumoniae serotype 3 (strain JL03).